The sequence spans 425 residues: Exodeoxyribonuclease 7 large subunit (425 aa).

The protein belongs to the XseA family. Heterooligomer composed of large and small subunits.

The protein localises to the cytoplasm. It catalyses the reaction Exonucleolytic cleavage in either 5'- to 3'- or 3'- to 5'-direction to yield nucleoside 5'-phosphates.. Bidirectionally degrades single-stranded DNA into large acid-insoluble oligonucleotides, which are then degraded further into small acid-soluble oligonucleotides. The sequence is that of Exodeoxyribonuclease 7 large subunit from Nocardia farcinica (strain IFM 10152).